Reading from the N-terminus, the 363-residue chain is 3-isopropylmalate dehydrogenase (363 aa).

Residue G78–E91 coordinates NAD(+). R99, R109, R138, and D227 together coordinate substrate. Mg(2+) contacts are provided by D227, D251, and D255. Residue G285–N297 participates in NAD(+) binding.

Belongs to the isocitrate and isopropylmalate dehydrogenases family. LeuB type 1 subfamily. As to quaternary structure, homodimer. The cofactor is Mg(2+). Mn(2+) is required as a cofactor.

The protein localises to the cytoplasm. The enzyme catalyses (2R,3S)-3-isopropylmalate + NAD(+) = 4-methyl-2-oxopentanoate + CO2 + NADH. Its pathway is amino-acid biosynthesis; L-leucine biosynthesis; L-leucine from 3-methyl-2-oxobutanoate: step 3/4. In terms of biological role, catalyzes the oxidation of 3-carboxy-2-hydroxy-4-methylpentanoate (3-isopropylmalate) to 3-carboxy-4-methyl-2-oxopentanoate. The product decarboxylates to 4-methyl-2 oxopentanoate. The chain is 3-isopropylmalate dehydrogenase from Escherichia coli O157:H7.